A 239-amino-acid chain; its full sequence is Uridylate kinase (239 aa).

An ATP-binding site is contributed by 12-15; it reads KLSG. Residue G54 participates in UMP binding. ATP-binding residues include G55 and R59. UMP-binding positions include D74 and 135–142; that span reads TGNPYFTT. Positions 162, 168, and 171 each coordinate ATP.

It belongs to the UMP kinase family. In terms of assembly, homohexamer.

The protein resides in the cytoplasm. It carries out the reaction UMP + ATP = UDP + ADP. It participates in pyrimidine metabolism; CTP biosynthesis via de novo pathway; UDP from UMP (UMPK route): step 1/1. Inhibited by UTP. Catalyzes the reversible phosphorylation of UMP to UDP. The chain is Uridylate kinase from Fusobacterium nucleatum subsp. nucleatum (strain ATCC 25586 / DSM 15643 / BCRC 10681 / CIP 101130 / JCM 8532 / KCTC 2640 / LMG 13131 / VPI 4355).